A 23-amino-acid chain; its full sequence is Phallacidin proprotein 1 (23 aa).

A propeptide is located at residue proline 1. A cross-link (cyclopeptide (Ala-Pro)) is located at residues 2 to 8 (AWLVDCP). The segment at residues 3–7 (WLVDC) is a cross-link (2'-cysteinyl-6'-hydroxytryptophan sulfoxide (Trp-Cys)). A propeptide spanning residues 9–23 (CVGDDINRLLTRGEK) is cleaved from the precursor.

Belongs to the MSDIN fungal toxin family. Processed by the macrocyclase-peptidase enzyme POPB to yield a toxic cyclic heptapeptide. POPB first removes 10 residues from the N-terminus. Conformational trapping of the remaining peptide forces the enzyme to release this intermediate rather than proceed to macrocyclization. The enzyme rebinds the remaining peptide in a different conformation and catalyzes macrocyclization of the N-terminal 7 residues.

Functionally, major toxin that belongs to the bicyclic heptapeptides called phallotoxins. Although structurally related to amatoxins, phallotoxins have a different mode of action, which is the stabilization of F-actin. Phallotoxins are poisonous when administered parenterally, but not orally because of poor absorption. The chain is Phallacidin proprotein 1 from Amanita phalloides (Death cap).